The sequence spans 326 residues: Glyceraldehyde-3-phosphate dehydrogenase, cytosolic (326 aa).

Residues 2 to 3 (RI), aspartate 24, and arginine 71 each bind NAD(+). Residues 142–144 (SCT), threonine 173, 202–203 (TG), and arginine 225 each bind D-glyceraldehyde 3-phosphate. Cysteine 143 functions as the Nucleophile in the catalytic mechanism. Asparagine 307 lines the NAD(+) pocket.

This sequence belongs to the glyceraldehyde-3-phosphate dehydrogenase family.

Its subcellular location is the cytoplasm. It catalyses the reaction D-glyceraldehyde 3-phosphate + phosphate + NAD(+) = (2R)-3-phospho-glyceroyl phosphate + NADH + H(+). Its pathway is carbohydrate degradation; glycolysis; pyruvate from D-glyceraldehyde 3-phosphate: step 1/5. In terms of biological role, key enzyme in glycolysis that catalyzes the first step of the pathway by converting D-glyceraldehyde 3-phosphate (G3P) into 3-phospho-D-glyceroyl phosphate. Essential for the maintenance of cellular ATP levels and carbohydrate metabolism. The sequence is that of Glyceraldehyde-3-phosphate dehydrogenase, cytosolic (GAPC) from Nicotiana tabacum (Common tobacco).